The chain runs to 396 residues: 1-deoxy-D-xylulose 5-phosphate reductoisomerase (396 aa).

Threonine 17, glycine 18, serine 19, isoleucine 20, asparagine 47, and asparagine 130 together coordinate NADPH. Lysine 131 is a 1-deoxy-D-xylulose 5-phosphate binding site. An NADPH-binding site is contributed by glutamate 132. Aspartate 156 contributes to the Mn(2+) binding site. 1-deoxy-D-xylulose 5-phosphate contacts are provided by serine 157, glutamate 158, serine 182, and histidine 205. Glutamate 158 contributes to the Mn(2+) binding site. Position 211 (glycine 211) interacts with NADPH. 1-deoxy-D-xylulose 5-phosphate is bound by residues serine 218, asparagine 223, lysine 224, and glutamate 227. Glutamate 227 contributes to the Mn(2+) binding site.

This sequence belongs to the DXR family. It depends on Mg(2+) as a cofactor. Mn(2+) serves as cofactor.

The enzyme catalyses 2-C-methyl-D-erythritol 4-phosphate + NADP(+) = 1-deoxy-D-xylulose 5-phosphate + NADPH + H(+). It functions in the pathway isoprenoid biosynthesis; isopentenyl diphosphate biosynthesis via DXP pathway; isopentenyl diphosphate from 1-deoxy-D-xylulose 5-phosphate: step 1/6. Its function is as follows. Catalyzes the NADPH-dependent rearrangement and reduction of 1-deoxy-D-xylulose-5-phosphate (DXP) to 2-C-methyl-D-erythritol 4-phosphate (MEP). The chain is 1-deoxy-D-xylulose 5-phosphate reductoisomerase from Rhizobium etli (strain CIAT 652).